Here is a 253-residue protein sequence, read N- to C-terminus: 3-deoxy-manno-octulosonate cytidylyltransferase (253 aa).

Belongs to the KdsB family.

The protein resides in the cytoplasm. The enzyme catalyses 3-deoxy-alpha-D-manno-oct-2-ulosonate + CTP = CMP-3-deoxy-beta-D-manno-octulosonate + diphosphate. It functions in the pathway nucleotide-sugar biosynthesis; CMP-3-deoxy-D-manno-octulosonate biosynthesis; CMP-3-deoxy-D-manno-octulosonate from 3-deoxy-D-manno-octulosonate and CTP: step 1/1. Its pathway is bacterial outer membrane biogenesis; lipopolysaccharide biosynthesis. In terms of biological role, activates KDO (a required 8-carbon sugar) for incorporation into bacterial lipopolysaccharide in Gram-negative bacteria. This chain is 3-deoxy-manno-octulosonate cytidylyltransferase, found in Acinetobacter baumannii (strain ATCC 17978 / DSM 105126 / CIP 53.77 / LMG 1025 / NCDC KC755 / 5377).